The following is a 581-amino-acid chain: Kelch-like protein 38 (581 aa).

The BTB domain occupies 34 to 101 (TDVSICAGAR…VYTGEAHIAT (68 aa)). Positions 136–237 (CLGMIRLSEI…HPAFFHHFIA (102 aa)) constitute a BACK domain. Kelch repeat units lie at residues 285–332 (FLIL…TLHR), 334–383 (IYVL…AHKN), 384–431 (FIFS…VKDQ), 433–479 (LYLF…VLGE), 480–521 (RIVI…VMGN), and 523–573 (LYVT…TLQC).

This chain is Kelch-like protein 38 (KLHL38), found in Homo sapiens (Human).